A 158-amino-acid polypeptide reads, in one-letter code: Rhombotin-2 (158 aa).

2 LIM zinc-binding domains span residues 30–89 (CGGC…RLFG) and 94–153 (CASC…EWTK).

As to quaternary structure, interacts via its LIM domains with ELF2 and LDB1. Also interacts with basic helix-loop-helix protein TAL1/SCL and can assemble in a complex with LMO2 and TAL1/SCL. Interacts with BEX2 and KDM5A.

The protein resides in the nucleus. Functionally, acts with TAL1/SCL to regulate red blood cell development. Also acts with LDB1 to maintain erythroid precursors in an immature state. In Homo sapiens (Human), this protein is Rhombotin-2 (LMO2).